A 556-amino-acid polypeptide reads, in one-letter code: Guanine nucleotide-binding protein-like 3 homolog (556 aa).

The segment at 29-50 (NRKVKKEAKKNGTTNKKEKTIS) is disordered. Positions 58-95 (KEEILVQAEQEREKIKVRQEAAKEAAKIHRIEKRKNNL) form a coiled coil. A CP-type G domain is found at 138–317 (ASEVRKTVEI…LIDSPGVILV (180 aa)). GTP-binding positions include 184-187 (NKID), 266-273 (GFPNVGKS), and 310-313 (DSPG). 2 disordered regions span residues 461-508 (APHN…PESL) and 525-556 (KKQKKKSKKTANRADKLSDSLGNMLGGDAMEM). Residues 466–478 (DEEEDDDDEMETD) are compositionally biased toward acidic residues. Residues 525–535 (KKQKKKSKKTA) show a composition bias toward basic residues.

Belongs to the TRAFAC class YlqF/YawG GTPase family.

It is found in the nucleus. In terms of biological role, may play a role in regulating cellular proliferation in both germline and somatic tissues. The chain is Guanine nucleotide-binding protein-like 3 homolog from Caenorhabditis elegans.